We begin with the raw amino-acid sequence, 120 residues long: Large ribosomal subunit protein eL8 (120 aa).

Belongs to the eukaryotic ribosomal protein eL8 family. In terms of assembly, part of the 50S ribosomal subunit. Probably part of the RNase P complex.

The protein localises to the cytoplasm. Its function is as follows. Multifunctional RNA-binding protein that recognizes the K-turn motif in ribosomal RNA, the RNA component of RNase P, box H/ACA, box C/D and box C'/D' sRNAs. This is Large ribosomal subunit protein eL8 from Methanosarcina mazei (strain ATCC BAA-159 / DSM 3647 / Goe1 / Go1 / JCM 11833 / OCM 88) (Methanosarcina frisia).